Consider the following 48-residue polypeptide: uncharacterized protein (48 aa).

The segment at 1–30 (MLGRTKLGNRNAQANNNAKKKNGFQTHFDS) is disordered.

This is an uncharacterized protein from Bacillus subtilis (strain 168).